A 339-amino-acid chain; its full sequence is Glycerol-3-phosphate dehydrogenase [NAD(P)+] (339 aa).

Residues Ser15, Tyr16, His36, and Lys110 each contribute to the NADPH site. Sn-glycerol 3-phosphate-binding residues include Lys110, Gly139, and Thr141. Position 143 (Ala143) interacts with NADPH. Positions 195, 248, 258, 259, and 260 each coordinate sn-glycerol 3-phosphate. The active-site Proton acceptor is Lys195. NADPH is bound at residue Arg259. Residues Val283 and Glu285 each contribute to the NADPH site.

The protein belongs to the NAD-dependent glycerol-3-phosphate dehydrogenase family.

The protein resides in the cytoplasm. It carries out the reaction sn-glycerol 3-phosphate + NAD(+) = dihydroxyacetone phosphate + NADH + H(+). The catalysed reaction is sn-glycerol 3-phosphate + NADP(+) = dihydroxyacetone phosphate + NADPH + H(+). It functions in the pathway membrane lipid metabolism; glycerophospholipid metabolism. Functionally, catalyzes the reduction of the glycolytic intermediate dihydroxyacetone phosphate (DHAP) to sn-glycerol 3-phosphate (G3P), the key precursor for phospholipid synthesis. The chain is Glycerol-3-phosphate dehydrogenase [NAD(P)+] from Shigella dysenteriae serotype 1 (strain Sd197).